The following is a 476-amino-acid chain: Aspartyl/glutamyl-tRNA(Asn/Gln) amidotransferase subunit B (476 aa).

The protein belongs to the GatB/GatE family. GatB subfamily. As to quaternary structure, heterotrimer of A, B and C subunits.

The catalysed reaction is L-glutamyl-tRNA(Gln) + L-glutamine + ATP + H2O = L-glutaminyl-tRNA(Gln) + L-glutamate + ADP + phosphate + H(+). It carries out the reaction L-aspartyl-tRNA(Asn) + L-glutamine + ATP + H2O = L-asparaginyl-tRNA(Asn) + L-glutamate + ADP + phosphate + 2 H(+). Functionally, allows the formation of correctly charged Asn-tRNA(Asn) or Gln-tRNA(Gln) through the transamidation of misacylated Asp-tRNA(Asn) or Glu-tRNA(Gln) in organisms which lack either or both of asparaginyl-tRNA or glutaminyl-tRNA synthetases. The reaction takes place in the presence of glutamine and ATP through an activated phospho-Asp-tRNA(Asn) or phospho-Glu-tRNA(Gln). The sequence is that of Aspartyl/glutamyl-tRNA(Asn/Gln) amidotransferase subunit B from Clostridium botulinum (strain Loch Maree / Type A3).